A 130-amino-acid chain; its full sequence is Ribonuclease pancreatic (130 aa).

Positions 1-6 (VQPSLG) are cleaved as a signal peptide. 2 residues coordinate substrate: lysine 13 and arginine 16. Histidine 18 serves as the catalytic Proton acceptor. 4 disulfides stabilise this stretch: cysteine 32-cysteine 90, cysteine 46-cysteine 101, cysteine 64-cysteine 116, and cysteine 71-cysteine 78. N-linked (GlcNAc...) asparagine glycosylation occurs at asparagine 40. Substrate is bound by residues 47–51 (KPVNT), lysine 72, and arginine 91. The Proton donor role is filled by histidine 125.

It belongs to the pancreatic ribonuclease family. In terms of assembly, monomer. Interacts with and forms tight 1:1 complexes with RNH1. Dimerization of two such complexes may occur. Interaction with RNH1 inhibits this protein. In terms of tissue distribution, pancreas.

It localises to the secreted. The enzyme catalyses an [RNA] containing cytidine + H2O = an [RNA]-3'-cytidine-3'-phosphate + a 5'-hydroxy-ribonucleotide-3'-[RNA].. It carries out the reaction an [RNA] containing uridine + H2O = an [RNA]-3'-uridine-3'-phosphate + a 5'-hydroxy-ribonucleotide-3'-[RNA].. Its function is as follows. Endonuclease that catalyzes the cleavage of RNA on the 3' side of pyrimidine nucleotides. Acts on single-stranded and double-stranded RNA. In Cricetulus griseus (Chinese hamster), this protein is Ribonuclease pancreatic (RNASE1).